The primary structure comprises 54 residues: Large ribosomal subunit protein uL15 (54 aa).

Residues 1–30 (MPSRLRXTRKLRGHVSHGHGRIGKHRKHPG) show a composition bias toward basic residues. The disordered stretch occupies residues 1-42 (MPSRLRXTRKLRGHVSHGHGRIGKHRKHPGGRGNAGGMHHHR). His39 is subject to (3S)-3-hydroxyhistidine. An N6-acetyllysine modification is found at Lys47.

It belongs to the universal ribosomal protein uL15 family. Component of the large ribosomal subunit. Hydroxylated on His-39 by MINA.

The protein localises to the cytoplasm. Functionally, component of the large ribosomal subunit. The ribosome is a large ribonucleoprotein complex responsible for the synthesis of proteins in the cell. This Sus scrofa (Pig) protein is Large ribosomal subunit protein uL15 (RPL27A).